The primary structure comprises 1876 residues: Phenolphthiocerol/phthiocerol polyketide synthase subunit A (1876 aa).

The Carrier 1 domain occupies A9–E83. Position 43 is an O-(pantetheine 4'-phosphoryl)serine (S43). Residues D101–Q526 form the Ketosynthase family 3 (KS3) domain. Catalysis depends on for beta-ketoacyl synthase activity residues C273, H408, and H448. Residues S626–P950 form an acyltransferase region. Residue S720 is the For malonyltransferase activity of the active site. Residues H997–S1112 form an N-terminal hotdog fold region. The PKS/mFAS DH domain maps to H997 to V1267. The active-site Proton acceptor; for dehydratase activity is the H1027. Residues T1102–A1130 form a disordered region. Low complexity predominate over residues S1106 to S1115. The tract at residues A1130 to V1267 is C-terminal hotdog fold. The active-site Proton donor; for dehydratase activity is D1186. An NADP(+)-binding site is contributed by A1491–L1551. Residues A1491 to V1728 form a beta-ketoacyl reductase region. Residues E1759–V1836 form the Carrier 2 domain. O-(pantetheine 4'-phosphoryl)serine is present on S1796.

It depends on NADP(+) as a cofactor. Requires pantetheine 4'-phosphate as cofactor.

The enzyme catalyses icosanoyl-[(phenol)carboxyphthiodiolenone synthase] + 2 (S)-methylmalonyl-CoA + 3 malonyl-CoA + 5 NADPH + 10 H(+) = C32-carboxyphthiodiolenone-[(phenol)carboxyphthiodiolenone synthase] + 5 CO2 + 5 NADP(+) + 5 CoA + 2 H2O. The catalysed reaction is docosanoyl-[(phenol)carboxyphthiodiolenone synthase] + 2 (S)-methylmalonyl-CoA + 3 malonyl-CoA + 5 NADPH + 10 H(+) = C34-carboxyphthiodiolenone-[(phenol)carboxyphthiodiolenone synthase] + 5 CO2 + 5 NADP(+) + 5 CoA + 2 H2O. It catalyses the reaction 17-(4-hydroxyphenyl)heptadecanoyl-[(phenol)carboxyphthiodiolenone synthase] + 2 (S)-methylmalonyl-CoA + 3 malonyl-CoA + 5 NADPH + 10 H(+) = C35-(phenol)carboxyphthiodiolenone-[(phenol)carboxyphthiodiolenone synthase] + 5 CO2 + 5 NADP(+) + 5 CoA + 2 H2O. It carries out the reaction 19-(4-hydroxyphenyl)nonadecanoyl-[(phenol)carboxyphthiodiolenone synthase] + 2 (S)-methylmalonyl-CoA + 3 malonyl-CoA + 5 NADPH + 10 H(+) = C37-(phenol)carboxyphthiodiolenone-[(phenol)carboxyphthiodiolenone synthase] + 5 CO2 + 5 NADP(+) + 5 CoA + 2 H2O. Its pathway is lipid metabolism; fatty acid biosynthesis. Part of the PpsABCDE complex involved in the biosynthesis of the lipid core common to phthiocerols and phenolphthiocerols by successive additions of malonyl-CoA or methylmalonyl-CoA extender units. PpsA can accept as substrate the activated forms of either icosanoyl (C20), docosanoyl (C22) or lignoceroyl (C24) groups from FadD26, or a (4-hydroxyphenyl)-C17 or (4-hydroxyphenyl)-C19 fatty acyl from FadD29. PpsA initiates the biosynthesis and extends its substrate using a malonyl-CoA extender unit. The PpsB and PpsC proteins add the second and third malonyl-CoA extender units. PpsD adds an (R)-methylmalonyl unit and PpsE adds a second (R)-methylmalonyl unit. The incorporation of the methylmalonyl units results in formation of two branched methyl groups in the elongated product. The protein is Phenolphthiocerol/phthiocerol polyketide synthase subunit A (ppsA) of Mycobacterium tuberculosis (strain CDC 1551 / Oshkosh).